A 700-amino-acid polypeptide reads, in one-letter code: Putative proline-rich receptor-like protein kinase PERK6 (700 aa).

The segment at 1–180 (MAEGQSPENS…SGGGSNSSGN (180 aa)) is disordered. Residues 1–186 (MAEGQSPENS…SSGNNEPNTA (186 aa)) lie on the Extracellular side of the membrane. Pro residues-rich tracts occupy residues 9–19 (NSPPSPTPPSP) and 29–47 (SPPP…PPPD). Low complexity predominate over residues 48–137 (DSSNGSPQPP…GNNNDNNNQN (90 aa)). A glycan (N-linked (GlcNAc...) asparagine) is linked at asparagine 176. Residues 187–207 (AIVGIVAGAGLLFLVMILFCV) traverse the membrane as a helical segment. The Cytoplasmic portion of the chain corresponds to 208–700 (CCCRKKKKKH…NNKTTPSRDH (493 aa)). Residues 249–315 (NLSQQYPGSN…GPSVPPPHPS (67 aa)) form a disordered region. Residues 255–265 (PGSNGNNNWMN) are compositionally biased toward low complexity. Positions 266–286 (SPPPPPPGSWQPSPPPPPPPV) are enriched in pro residues. Threonine 326 carries the phosphothreonine modification. A Protein kinase domain is found at 337–615 (FSQSRLLGQG…VRALEGDATL (279 aa)). ATP is bound by residues 343 to 351 (LGQGGFGYV) and lysine 365. Tyrosine 410 is subject to Phosphotyrosine. The active-site Proton acceptor is aspartate 461. 2 positions are modified to phosphoserine: serine 465 and serine 494. 2 positions are modified to phosphothreonine: threonine 495 and threonine 500. The residue at position 508 (tyrosine 508) is a Phosphotyrosine. 2 disordered regions span residues 616 to 642 (DDLS…DSST) and 659 to 700 (EYGA…SRDH). The segment covering 689–700 (ANNNKTTPSRDH) has biased composition (polar residues).

This sequence belongs to the protein kinase superfamily. Ser/Thr protein kinase family. In terms of tissue distribution, mostly expressed in flower buds.

It is found in the cell membrane. It catalyses the reaction L-seryl-[protein] + ATP = O-phospho-L-seryl-[protein] + ADP + H(+). It carries out the reaction L-threonyl-[protein] + ATP = O-phospho-L-threonyl-[protein] + ADP + H(+). The sequence is that of Putative proline-rich receptor-like protein kinase PERK6 (PERK6) from Arabidopsis thaliana (Mouse-ear cress).